Here is a 491-residue protein sequence, read N- to C-terminus: Monocarboxylate transport permease protein (491 aa).

13 helical membrane-spanning segments follow: residues 7-27 (GTAL…GFVA), 55-75 (WFLV…PALV), 83-103 (FFAL…MPVL), 130-150 (LAVA…QLVG), 157-177 (ALGL…ALYT), 187-207 (LIAF…VALI), 246-266 (LALG…GIFA), 277-297 (AIML…GYMG), 322-342 (WFSG…AAVM), 374-396 (ITSL…QFAL), 400-422 (LLGG…TNWF), 427-447 (LLAG…DAGW), and 465-485 (GLLA…LLPA).

The protein belongs to the sodium:solute symporter (SSF) (TC 2.A.21) family.

The protein resides in the cell membrane. Its activity is regulated as follows. Inhibited by CCCP, but is apparently not affected by the concentration of sodium. In terms of biological role, low-affinity transporter of alanine and high-affinity transporter of lactate and pyruvate. Can also transport other monocarboxylates such as propionate, butyrate, alpha-hydroxybutyrate or acetate. May be proton coupled. Required for optimal growth on alanine or pyruvate and ammonia. The protein is Monocarboxylate transport permease protein of Rhizobium johnstonii (strain DSM 114642 / LMG 32736 / 3841) (Rhizobium leguminosarum bv. viciae).